The chain runs to 115 residues: Large ribosomal subunit protein bL19 (115 aa).

This sequence belongs to the bacterial ribosomal protein bL19 family.

Functionally, this protein is located at the 30S-50S ribosomal subunit interface and may play a role in the structure and function of the aminoacyl-tRNA binding site. In Bacillus pumilus (strain SAFR-032), this protein is Large ribosomal subunit protein bL19.